The chain runs to 371 residues: Queuine tRNA-ribosyltransferase (371 aa).

The Proton acceptor role is filled by D90. Residues 90-94, D144, Q189, and G215 each bind substrate; that span reads DSGGF. The tract at residues 246-252 is RNA binding; it reads GVGTPEN. The active-site Nucleophile is D265. An RNA binding; important for wobble base 34 recognition region spans residues 270–274; it reads TRNAR. 4 residues coordinate Zn(2+): C303, C305, C308, and H334.

It belongs to the queuine tRNA-ribosyltransferase family. Homodimer. Within each dimer, one monomer is responsible for RNA recognition and catalysis, while the other monomer binds to the replacement base PreQ1. Requires Zn(2+) as cofactor.

The catalysed reaction is 7-aminomethyl-7-carbaguanine + guanosine(34) in tRNA = 7-aminomethyl-7-carbaguanosine(34) in tRNA + guanine. Its pathway is tRNA modification; tRNA-queuosine biosynthesis. Functionally, catalyzes the base-exchange of a guanine (G) residue with the queuine precursor 7-aminomethyl-7-deazaguanine (PreQ1) at position 34 (anticodon wobble position) in tRNAs with GU(N) anticodons (tRNA-Asp, -Asn, -His and -Tyr). Catalysis occurs through a double-displacement mechanism. The nucleophile active site attacks the C1' of nucleotide 34 to detach the guanine base from the RNA, forming a covalent enzyme-RNA intermediate. The proton acceptor active site deprotonates the incoming PreQ1, allowing a nucleophilic attack on the C1' of the ribose to form the product. After dissociation, two additional enzymatic reactions on the tRNA convert PreQ1 to queuine (Q), resulting in the hypermodified nucleoside queuosine (7-(((4,5-cis-dihydroxy-2-cyclopenten-1-yl)amino)methyl)-7-deazaguanosine). This is Queuine tRNA-ribosyltransferase from Helicobacter pylori (strain J99 / ATCC 700824) (Campylobacter pylori J99).